A 321-amino-acid chain; its full sequence is D-alanine--D-alanine ligase (321 aa).

In terms of domain architecture, ATP-grasp spans 121–315 (RSWFLTNNIN…FVNLIEEILK (195 aa)). 148–199 (IKRPYVIKPFTQGSSIGVEVIFEEDDFNFANYDFPYGDEVIIEKYIKGRELQ) is an ATP binding site. Glu-268, Glu-282, and Asn-284 together coordinate Mg(2+).

Belongs to the D-alanine--D-alanine ligase family. Mg(2+) serves as cofactor. The cofactor is Mn(2+).

It localises to the cytoplasm. It catalyses the reaction 2 D-alanine + ATP = D-alanyl-D-alanine + ADP + phosphate + H(+). The protein operates within cell wall biogenesis; peptidoglycan biosynthesis. Cell wall formation. The polypeptide is D-alanine--D-alanine ligase (Rickettsia bellii (strain OSU 85-389)).